A 208-amino-acid polypeptide reads, in one-letter code: Harpin secretion protein HrpW (208 aa).

4 helical membrane-spanning segments follow: residues leucine 2–phenylalanine 22, alanine 46–isoleucine 66, isoleucine 149–leucine 169, and valine 176–tryptophan 196.

It belongs to the FliP/MopC/SpaP family.

It is found in the cell membrane. In terms of biological role, required for the secretion of harpin. The polypeptide is Harpin secretion protein HrpW (hrpW) (Pseudomonas syringae pv. syringae).